The sequence spans 396 residues: NASP-related protein sim3 (396 aa).

The tract at residues 1-31 is disordered; the sequence is MSSDTKTLENSKGNSATDADTKNPSSSDSRA. TPR repeat units lie at residues 32-65 and 89-122; these read IEQLVTQGNMAYAQKNYEEAVDKYGQALMQSESI and IENSQVLGNALGAKESVSQATESFEEPEAIGSFT. Residues 135–164 are disordered; that stretch reads NEENSSIAHPEKESEEKETNEASPASEEDE. The span at 143–154 shows a compositional bias: basic and acidic residues; that stretch reads HPEKESEEKETN. One copy of the TPR 3 repeat lies at 199-232; it reads ADIYDLLGELSLEIENFSQASQDLKTALEWKEKV. Positions 267–329 form a coiled coil; sequence CEHVEKAAEI…QKTLDLKHGA (63 aa). Basic and acidic residues predominate over residues 284–301; the sequence is RENEVTDKKGKGKQKAEE. Disordered stretches follow at residues 284–307 and 334–396; these read RENEVTDKKGKGKQKAEESTLTSD and EAVM…KKKD. Residues 343–353 show a composition bias toward low complexity; it reads SSLLSKDSSSL.

The protein belongs to the NASP family. As to quaternary structure, interacts with cnp1, hht1, hht2 and hht3; has a preference for CENP-A (cnp1) over histone H3 (hht1/2/3).

Its subcellular location is the nucleus. Its function is as follows. Histone H3 and H3-like CENP-A-specific chaperone. Promotes delivery and incorporation of CENP-A in centromeric chromatin, probably by escorting nascent CENP-A to CENP-A chromatin assembly factors. Required for central core silencing and normal chromosome segregation. This is NASP-related protein sim3 (sim3) from Schizosaccharomyces pombe (strain 972 / ATCC 24843) (Fission yeast).